Here is a 463-residue protein sequence, read N- to C-terminus: Exodeoxyribonuclease 7 large subunit (463 aa).

It belongs to the XseA family. As to quaternary structure, heterooligomer composed of large and small subunits.

It is found in the cytoplasm. The enzyme catalyses Exonucleolytic cleavage in either 5'- to 3'- or 3'- to 5'-direction to yield nucleoside 5'-phosphates.. Functionally, bidirectionally degrades single-stranded DNA into large acid-insoluble oligonucleotides, which are then degraded further into small acid-soluble oligonucleotides. The protein is Exodeoxyribonuclease 7 large subunit of Bordetella pertussis (strain Tohama I / ATCC BAA-589 / NCTC 13251).